We begin with the raw amino-acid sequence, 683 residues long: Sorting nexin MVP1 (683 aa).

Disordered regions lie at residues 1–25 and 246–276; these read MSRHHRPFTWGGAQPGASFSNPTSP and LLAHNQGSSTDTFLAPDRTEARARQPNTRQE. Residues 248–257 show a composition bias toward polar residues; the sequence is AHNQGSSTDT. Positions 302 to 418 constitute a PX domain; that stretch reads PEDQVTVRLR…EVFFTEPRPI (117 aa). Positions 338, 340, 364, and 385 each coordinate a 1,2-diacyl-sn-glycero-3-phospho-(1D-myo-inositol-3-phosphate).

The protein belongs to the sorting nexin family.

It is found in the cytoplasm. The protein resides in the membrane. Functionally, required for vacuolar protein sorting. This chain is Sorting nexin MVP1 (MVP1), found in Mycosarcoma maydis (Corn smut fungus).